We begin with the raw amino-acid sequence, 1388 residues long: Rho-associated protein kinase 2 (1388 aa).

A disordered region spans residues 1-24; sequence MSRPPPTGKMPGAPEAVSGDGAGA. The Protein kinase domain maps to 92–354; the sequence is YDVVKVIGRG…VEEIKQHPFF (263 aa). Residues 98-106 and Lys-121 each bind ATP; that span reads IGRGAFGEV. The active-site Proton acceptor is Asp-214. Positions 357–425 constitute an AGC-kinase C-terminal domain; it reads DQWNWDNIRE…YRENLLLSDS (69 aa). The interval 363-784 is interaction with PPP1R12A; sequence NIRETAAPVV…INELLKQKDV (422 aa). An interaction with NPM1 region spans residues 373–420; the sequence is PELSSDIDSSNFDDIEDDKGDVETFPIPKAFVGNQLPFIGFTYYRENL. Thr-414 is modified (phosphothreonine; by ROCK2). The region spanning 497–573 is the REM-1 domain; sequence ALRQLEREKA…LDETNALLRT (77 aa). Residues 512 to 530 show a composition bias toward basic and acidic residues; sequence NAEYQRKADHEADKKRNLE. A disordered region spans residues 512–532; the sequence is NAEYQRKADHEADKKRNLEND. At Tyr-722 the chain carries Phosphotyrosine; by SRC. Positions 979 to 1047 constitute a RhoBD domain; the sequence is TSDVANLANE…LAEIMNRKEP (69 aa). Residues 979–1047 form an RHOA binding region; the sequence is TSDVANLANE…LAEIMNRKEP (69 aa). Positions 1054-1126 form a coiled coil; that stretch reads TDMRRKEKEN…EQLRSQLQAL (73 aa). Ser-1137 is modified (phosphoserine). One can recognise a PH domain in the interval 1150 to 1349; the sequence is ESRLEGWLSL…WVSRLVKKIP (200 aa). At Thr-1212 the chain carries Phosphothreonine. Residues 1260–1315 form a Phorbol-ester/DAG-type zinc finger; that stretch reads GHEFIPTLYHFPTNCEACMKPLWHMFKPPPALECRRCHIKCHKDHMDKKEEIIAPC. Residues 1345–1388 are disordered; the sequence is VKKIPKKPPAPDPFARSSPRTSMKIQQNQSIRRPSRQLAANKPS. Residues Ser-1362 and Ser-1374 each carry the phosphoserine modification. Positions 1362-1376 are enriched in polar residues; that stretch reads SPRTSMKIQQNQSIR.

The protein belongs to the protein kinase superfamily. AGC Ser/Thr protein kinase family. As to quaternary structure, homodimer. Interacts with IRS1. Interacts with RAF1. Interacts with RHOA (activated by GTP), RHOB and RHOC. Interacts with PPP1R12A. Interacts with EP300. Interacts with CHORDC1. Interacts with BRCA2. Interacts with NPM1; this interaction enhances ROCK2 activity. Interacts with SORL1. Interacts with PJVK. Requires Mg(2+) as cofactor. Post-translationally, autophosphorylated. Phosphorylation at Tyr-722 reduces its binding to RHOA and is crucial for focal adhesion dynamics. Dephosphorylation by PTPN11 stimulates its RHOA binding activity. In terms of processing, cleaved by granzyme B during apoptosis. This leads to constitutive activation of the kinase and membrane blebbing.

Its subcellular location is the cytoplasm. It is found in the cell membrane. It localises to the nucleus. The protein resides in the cytoskeleton. The protein localises to the microtubule organizing center. Its subcellular location is the centrosome. It carries out the reaction L-seryl-[protein] + ATP = O-phospho-L-seryl-[protein] + ADP + H(+). The enzyme catalyses L-threonyl-[protein] + ATP = O-phospho-L-threonyl-[protein] + ADP + H(+). Activated by RHOA binding. Inhibited by Y-27632. Its function is as follows. Protein kinase which is a key regulator of actin cytoskeleton and cell polarity. Involved in regulation of smooth muscle contraction, actin cytoskeleton organization, stress fiber and focal adhesion formation, neurite retraction, cell adhesion and motility via phosphorylation of ADD1, BRCA2, CNN1, EZR, DPYSL2, EP300, MSN, MYL9/MLC2, NPM1, RDX, PPP1R12A and VIM. Phosphorylates SORL1 and IRF4. Acts as a negative regulator of VEGF-induced angiogenic endothelial cell activation. Positively regulates the activation of p42/MAPK1-p44/MAPK3 and of p90RSK/RPS6KA1 during myogenic differentiation. Plays an important role in the timely initiation of centrosome duplication. Inhibits keratinocyte terminal differentiation. May regulate closure of the eyelids and ventral body wall through organization of actomyosin bundles. Plays a critical role in the regulation of spine and synaptic properties in the hippocampus. Plays an important role in generating the circadian rhythm of the aortic myofilament Ca(2+) sensitivity and vascular contractility by modulating the myosin light chain phosphorylation. The sequence is that of Rho-associated protein kinase 2 (ROCK2) from Sus scrofa (Pig).